The primary structure comprises 778 residues: Lon protease (778 aa).

The 202-residue stretch at 6 to 207 (LPLMALRDMV…TVISTLTSNI (202 aa)) folds into the Lon N-terminal domain. Residue 356-363 (GPPGVGKT) coordinates ATP. The region spanning 592-773 (EDQIGSTTGL…DQVLKHALVE (182 aa)) is the Lon proteolytic domain. Catalysis depends on residues Ser679 and Lys722.

It belongs to the peptidase S16 family. In terms of assembly, homohexamer. Organized in a ring with a central cavity.

The protein resides in the cytoplasm. The catalysed reaction is Hydrolysis of proteins in presence of ATP.. In terms of biological role, ATP-dependent serine protease that mediates the selective degradation of mutant and abnormal proteins as well as certain short-lived regulatory proteins. Required for cellular homeostasis and for survival from DNA damage and developmental changes induced by stress. Degrades polypeptides processively to yield small peptide fragments that are 5 to 10 amino acids long. Binds to DNA in a double-stranded, site-specific manner. The polypeptide is Lon protease (Rickettsia felis (strain ATCC VR-1525 / URRWXCal2) (Rickettsia azadi)).